A 256-amino-acid polypeptide reads, in one-letter code: Carboxysome shell protein CsoS1D (256 aa).

The segment at 1-24 (MEPTSSLNRGDRKKGSSLVTGSEV) is disordered. BMC circularly permuted domains follow at residues 55–157 (ELRT…RTKP) and 158–256 (STSW…ISNY). The Gates the pore signature appears at 120–121 (ER).

Belongs to the EutL/PduB family. In terms of assembly, homotrimer. Forms a dimer of stacked trimers, the same faces interact. A CsoS1-CsoS1D-CsoS2 complex can be isolated following expression in E.coli.

It is found in the carboxysome. Its function is as follows. Part of the carboxysome shell, a polyhedral inclusion where RuBisCO (ribulose bisphosphate carboxylase, cbbL-cbbS) is sequestered. It may control transport of RuBisCO reactants in and out of the carboxysome. There are estimated to be 6 CsoS1D hexamers per carboxysome. This chain is Carboxysome shell protein CsoS1D, found in Prochlorococcus marinus subsp. pastoris (strain CCMP1986 / NIES-2087 / MED4).